A 464-amino-acid chain; its full sequence is Trigger factor (464 aa).

One can recognise a PPIase FKBP-type domain in the interval 162-243 (GDFISIDLSA…VGTVKERELP (82 aa)). A disordered region spans residues 435 to 464 (ELFGNGEAETEEAASTDEAASDSTESEDQK).

It belongs to the FKBP-type PPIase family. Tig subfamily.

The protein localises to the cytoplasm. It carries out the reaction [protein]-peptidylproline (omega=180) = [protein]-peptidylproline (omega=0). Its function is as follows. Involved in protein export. Acts as a chaperone by maintaining the newly synthesized protein in an open conformation. Functions as a peptidyl-prolyl cis-trans isomerase. The chain is Trigger factor from Rhodococcus jostii (strain RHA1).